A 308-amino-acid polypeptide reads, in one-letter code: Elongation factor Ts (308 aa).

Residues 80 to 83 form an involved in Mg(2+) ion dislocation from EF-Tu region; sequence TDFV.

It belongs to the EF-Ts family.

The protein localises to the cytoplasm. In terms of biological role, associates with the EF-Tu.GDP complex and induces the exchange of GDP to GTP. It remains bound to the aminoacyl-tRNA.EF-Tu.GTP complex up to the GTP hydrolysis stage on the ribosome. This chain is Elongation factor Ts, found in Rhizobium johnstonii (strain DSM 114642 / LMG 32736 / 3841) (Rhizobium leguminosarum bv. viciae).